A 417-amino-acid polypeptide reads, in one-letter code: Lysosome-associated membrane glycoprotein 1 (417 aa).

The N-terminal stretch at 1-28 (MAAPGSARRPLLLLLLLLLLGLMHCASA) is a signal peptide. Residues 29-194 (AMFMVKNGNG…SRGETRCEQD (166 aa)) form a first lumenal domain region. Residues 29-382 (AMFMVKNGNG…EECLLDENSM (354 aa)) are Lumenal-facing. 2 N-linked (GlcNAc...) asparagine glycosylation sites follow: Asn37 and Asn45. Cys41 and Cys80 form a disulfide bridge. A glycan (N-linked (GlcNAc...) (polylactosaminoglycan) asparagine) is linked at Asn62. 4 N-linked (GlcNAc...) asparagine glycosylation sites follow: Asn76, Asn84, Asn103, and Asn107. Asn121 and Asn130 each carry an N-linked (GlcNAc...) (polylactosaminoglycan) asparagine glycan. Cys155 and Cys191 are oxidised to a cystine. N-linked (GlcNAc...) asparagine glycosylation is found at Asn165 and Asn181. A disordered region spans residues 184 to 221 (FSRGETRCEQDRPSPTTAPPAPPSPSPSPVPKSPSVDK). Residues 195–227 (RPSPTTAPPAPPSPSPSPVPKSPSVDKYNVSGT) form a hinge region. Ser197 is a glycosylation site (O-linked (GalNAc...) serine; partial). 2 O-linked (GalNAc...) threonine glycosylation sites follow: Thr199 and Thr200. The span at 199–215 (TTAPPAPPSPSPSPVPK) shows a compositional bias: pro residues. O-linked (GalNAc...) serine glycosylation is found at Ser207, Ser209, and Ser211. Asn223 and Asn228 each carry an N-linked (GlcNAc...) (polylactosaminoglycan) asparagine glycan. The interval 228 to 382 (NGTCLLASMG…EECLLDENSM (155 aa)) is second lumenal domain. A disulfide bridge links Cys231 with Cys269. 5 N-linked (GlcNAc...) asparagine glycosylation sites follow: Asn241, Asn249, Asn261, Asn293, and Asn322. An intrachain disulfide couples Cys338 to Cys375. A helical membrane pass occupies residues 383-410 (LIPIAVGGALAGLVLIVLIAYLVGRKRS). The Cytoplasmic segment spans residues 411-417 (HAGYQTI).

The protein belongs to the LAMP family. As to quaternary structure, interacts with ABCB9; this interaction strongly stabilizes ABCB9 and protects ABCB9 against lysosomal degradation. Interacts with FURIN. Interacts with TMEM175; inhibiting the proton channel activity of TMEM175. In terms of assembly, (Microbial infection) Interacts with Lassa virus protein glycoprotein. (Microbial infection) Interacts with mumps virus protein F; this interaction promotes protein F cleavage by FURIN. In terms of processing, O- and N-glycosylated; some of the 18 N-linked glycans are polylactosaminoglycans. (Microbial infection) The glycosylation of Asn-76 is essential for Lassa virus entry into cells.

The protein localises to the lysosome membrane. Its subcellular location is the endosome membrane. It is found in the late endosome membrane. It localises to the cell membrane. The protein resides in the cytolytic granule membrane. Lysosomal membrane glycoprotein which plays an important role in lysosome biogenesis, lysosomal pH regulation, autophagy and cholesterol homeostasis. Acts as an important regulator of lysosomal lumen pH regulation by acting as a direct inhibitor of the proton channel TMEM175, facilitating lysosomal acidification for optimal hydrolase activity. Also plays an important role in NK-cells cytotoxicity. Mechanistically, participates in cytotoxic granule movement to the cell surface and perforin trafficking to the lytic granule. In addition, protects NK-cells from degranulation-associated damage induced by their own cytotoxic granule content. Presents carbohydrate ligands to selectins. In terms of biological role, (Microbial infection) Acts as a receptor for Lassa virus glycoprotein. Also promotes fusion of the virus with host membrane in less acidic endosomes. Functionally, (Microbial infection) Supports the FURIN-mediated cleavage of mumps virus fusion protein F by interacting with both FURIN and the unprocessed form but not the processed form of the viral protein F. This chain is Lysosome-associated membrane glycoprotein 1, found in Homo sapiens (Human).